Reading from the N-terminus, the 417-residue chain is DNA primase DnaG (417 aa).

The region spanning 171 to 257 (DAIIIVEGRA…SVEDMARKEI (87 aa)) is the Toprim domain. Mg(2+) contacts are provided by E177, D219, and D221. The disordered stretch occupies residues 278-325 (VPGEKRTQDLRPQKPGASEQNSIKKENVENENESTPTSFEPISEPAPP). Residues 279–289 (PGEKRTQDLRP) show a composition bias toward basic and acidic residues.

It belongs to the archaeal DnaG primase family. As to quaternary structure, forms a ternary complex with MCM helicase and DNA. It depends on Mg(2+) as a cofactor.

It catalyses the reaction ssDNA + n NTP = ssDNA/pppN(pN)n-1 hybrid + (n-1) diphosphate.. Functionally, RNA polymerase that catalyzes the synthesis of short RNA molecules used as primers for DNA polymerase during DNA replication. This is DNA primase DnaG from Methanosphaerula palustris (strain ATCC BAA-1556 / DSM 19958 / E1-9c).